The primary structure comprises 72 residues: Translation initiation factor IF-1 (72 aa).

One can recognise an S1-like domain in the interval 1–72 (MTKEDSFEMH…SKGRIIFRSR (72 aa)).

The protein belongs to the IF-1 family. In terms of assembly, component of the 30S ribosomal translation pre-initiation complex which assembles on the 30S ribosome in the order IF-2 and IF-3, IF-1 and N-formylmethionyl-tRNA(fMet); mRNA recruitment can occur at any time during PIC assembly.

It is found in the cytoplasm. In terms of biological role, one of the essential components for the initiation of protein synthesis. Stabilizes the binding of IF-2 and IF-3 on the 30S subunit to which N-formylmethionyl-tRNA(fMet) subsequently binds. Helps modulate mRNA selection, yielding the 30S pre-initiation complex (PIC). Upon addition of the 50S ribosomal subunit IF-1, IF-2 and IF-3 are released leaving the mature 70S translation initiation complex. The sequence is that of Translation initiation factor IF-1 from Blochmanniella pennsylvanica (strain BPEN).